The chain runs to 389 residues: Alanine racemase TOXG (389 aa).

N6-(pyridoxal phosphate)lysine is present on Lys-235.

This sequence belongs to the threonine aldolase family. Pyridoxal 5'-phosphate serves as cofactor.

It carries out the reaction L-alanine = D-alanine. It participates in mycotoxin biosynthesis; HC-toxin biosynthesis. Its function is as follows. Alanine racemase, part of the diffuse TOX2 gene cluster that mediates the biosynthesis of the HC-toxin, cyclic tetrapeptide of structure cyclo(D-Pro-L-Ala-D-Ala-L-Aeo), where Aeo stands for 2-amino-9,10-epoxi-8-oxodecanoic acid. HC-toxin is a determinant of specificity and virulence in the interaction between the producing fungus and its host, maize. TOXG catalyzes the conversion of L-alanine into D-alanine, an essential precursor for the production of the major forms of HC-toxin by the non-ribosomal peptide synthetase HTS1. This is Alanine racemase TOXG from Cochliobolus carbonum (Maize leaf spot fungus).